We begin with the raw amino-acid sequence, 91 residues long: Potassium channel toxin TstKMK (91 aa).

The first 25 residues, 1 to 25 (MVATNRCCVFALLFALLLVHSLTEA), serve as a signal peptide directing secretion. Positions 26 to 42 (GKGKEILGKIKEKIIEA) are excised as a propeptide. The region spanning 58-91 (EYACPAIDKFCEDHCAAKKAVGKCDDFKCKCIKL) is the BetaSPN-type CS-alpha/beta domain. Intrachain disulfides connect cysteine 61–cysteine 81, cysteine 68–cysteine 86, and cysteine 72–cysteine 88.

This sequence belongs to the long chain scorpion toxin family. Class 2 subfamily. Expressed by the venom gland.

The protein localises to the secreted. The full peptide presents antibacterial and cytotoxic activities. The synthetic C-terminus (AA 33-76) inhibits voltage-gated potassium channels Kv1.1/KCNA1, Kv1.2/KCNA2, and Kv1.3/KCNA3. This Tityus stigmurus (Brazilian scorpion) protein is Potassium channel toxin TstKMK.